We begin with the raw amino-acid sequence, 421 residues long: tRNA (guanine-N(7)-)-methyltransferase non-catalytic subunit TRM82 (421 aa).

3 WD repeats span residues Ala72 to Glu112, Gly170 to Lys212, and Gly216 to Ser258.

Belongs to the WD repeat TRM82 family. In terms of assembly, forms a heterodimer with the catalytic subunit TRM8.

It localises to the nucleus. Its pathway is tRNA modification; N(7)-methylguanine-tRNA biosynthesis. Its function is as follows. Required for the formation of N(7)-methylguanine at position 46 (m7G46) in tRNA. In the complex, it is required to stabilize and induce conformational changes of the catalytic subunit. This chain is tRNA (guanine-N(7)-)-methyltransferase non-catalytic subunit TRM82, found in Candida glabrata (strain ATCC 2001 / BCRC 20586 / JCM 3761 / NBRC 0622 / NRRL Y-65 / CBS 138) (Yeast).